The chain runs to 151 residues: Deoxyuridine 5'-triphosphate nucleotidohydrolase (151 aa).

Residues 70–72 (RSG), Asn83, 87–89 (LID), and Met97 contribute to the substrate site.

This sequence belongs to the dUTPase family. The cofactor is Mg(2+).

The catalysed reaction is dUTP + H2O = dUMP + diphosphate + H(+). Its pathway is pyrimidine metabolism; dUMP biosynthesis; dUMP from dCTP (dUTP route): step 2/2. Its function is as follows. This enzyme is involved in nucleotide metabolism: it produces dUMP, the immediate precursor of thymidine nucleotides and it decreases the intracellular concentration of dUTP so that uracil cannot be incorporated into DNA. The protein is Deoxyuridine 5'-triphosphate nucleotidohydrolase of Pseudomonas syringae pv. syringae (strain B728a).